An 88-amino-acid polypeptide reads, in one-letter code: HssA/B-like protein 13 (88 aa).

This sequence belongs to the hssA/B family.

This Dictyostelium discoideum (Social amoeba) protein is HssA/B-like protein 13 (hssl13).